The chain runs to 510 residues: Cobyric acid synthase (510 aa).

The 210-residue stretch at 249 to 458 (CFKVRVLVYP…LHGLFDSPDA (210 aa)) folds into the GATase cobBQ-type domain. The active-site Nucleophile is the Cys336. The active site involves His450.

It belongs to the CobB/CobQ family. CobQ subfamily.

It functions in the pathway cofactor biosynthesis; adenosylcobalamin biosynthesis. Its function is as follows. Catalyzes amidations at positions B, D, E, and G on adenosylcobyrinic A,C-diamide. NH(2) groups are provided by glutamine, and one molecule of ATP is hydrogenolyzed for each amidation. This is Cobyric acid synthase from Shewanella oneidensis (strain ATCC 700550 / JCM 31522 / CIP 106686 / LMG 19005 / NCIMB 14063 / MR-1).